A 237-amino-acid chain; its full sequence is Cobalt-precorrin-2 C(20)-methyltransferase (237 aa).

It belongs to the precorrin methyltransferase family. In terms of assembly, homodimer.

The catalysed reaction is Co-precorrin-2 + S-adenosyl-L-methionine = Co-precorrin-3 + S-adenosyl-L-homocysteine + H(+). The protein operates within cofactor biosynthesis; adenosylcobalamin biosynthesis; cob(II)yrinate a,c-diamide from sirohydrochlorin (anaerobic route): step 2/10. Methylates cobalt-precorrin-2 at the C-20 position to produce cobalt-precorrin-3A in the anaerobic cobalamin biosynthesis pathway. The protein is Cobalt-precorrin-2 C(20)-methyltransferase (cbiL) of Salmonella typhimurium (strain LT2 / SGSC1412 / ATCC 700720).